Here is an 860-residue protein sequence, read N- to C-terminus: Leucine--tRNA ligase (860 aa).

The 'HIGH' region signature appears at 42–52 (PYPSGRLHMGH). Positions 619–623 (KMSKS) match the 'KMSKS' region motif. Lys622 is an ATP binding site.

This sequence belongs to the class-I aminoacyl-tRNA synthetase family.

The protein localises to the cytoplasm. It carries out the reaction tRNA(Leu) + L-leucine + ATP = L-leucyl-tRNA(Leu) + AMP + diphosphate. This chain is Leucine--tRNA ligase, found in Pasteurella multocida (strain Pm70).